We begin with the raw amino-acid sequence, 302 residues long: 4-hydroxy-tetrahydrodipicolinate synthase (302 aa).

A pyruvate-binding site is contributed by threonine 55. Tyrosine 144 (proton donor/acceptor) is an active-site residue. Lysine 172 acts as the Schiff-base intermediate with substrate in catalysis. Residue valine 214 coordinates pyruvate.

It belongs to the DapA family. As to quaternary structure, homotetramer; dimer of dimers.

The protein localises to the cytoplasm. It carries out the reaction L-aspartate 4-semialdehyde + pyruvate = (2S,4S)-4-hydroxy-2,3,4,5-tetrahydrodipicolinate + H2O + H(+). It functions in the pathway amino-acid biosynthesis; L-lysine biosynthesis via DAP pathway; (S)-tetrahydrodipicolinate from L-aspartate: step 3/4. Catalyzes the condensation of (S)-aspartate-beta-semialdehyde [(S)-ASA] and pyruvate to 4-hydroxy-tetrahydrodipicolinate (HTPA). This chain is 4-hydroxy-tetrahydrodipicolinate synthase, found in Synechococcus sp. (strain CC9902).